The sequence spans 183 residues: uncharacterized protein (183 aa).

This is an uncharacterized protein from Shigella flexneri.